The primary structure comprises 146 residues: Ribonuclease H (146 aa).

The RNase H type-1 domain occupies 4-145 (ELNKVVVYTD…ADMLARSQIV (142 aa)). Mg(2+)-binding residues include Asp-13, Glu-51, Asp-73, and Asp-137.

This sequence belongs to the RNase H family. Monomer. Requires Mg(2+) as cofactor.

It localises to the cytoplasm. The enzyme catalyses Endonucleolytic cleavage to 5'-phosphomonoester.. Its function is as follows. Endonuclease that specifically degrades the RNA of RNA-DNA hybrids. The protein is Ribonuclease H of Ehrlichia ruminantium (strain Gardel).